The primary structure comprises 309 residues: Glutaminase (309 aa).

S64, N114, E160, N167, Y191, Y243, and V261 together coordinate substrate.

The protein belongs to the glutaminase family. In terms of assembly, homotetramer.

It catalyses the reaction L-glutamine + H2O = L-glutamate + NH4(+). The sequence is that of Glutaminase from Methylorubrum extorquens (strain PA1) (Methylobacterium extorquens).